Here is a 156-residue protein sequence, read N- to C-terminus: Ribosome maturation factor RimP (156 aa).

The protein belongs to the RimP family.

The protein localises to the cytoplasm. In terms of biological role, required for maturation of 30S ribosomal subunits. The protein is Ribosome maturation factor RimP of Anoxybacillus flavithermus (strain DSM 21510 / WK1).